The chain runs to 343 residues: GDP-D-glucose phosphorylase 1 (343 aa).

Histidine 183 acts as the Tele-GMP-histidine intermediate in catalysis.

The protein belongs to the GDPGP1 family.

The protein resides in the cytoplasm. The enzyme catalyses GDP-alpha-D-glucose + phosphate = alpha-D-glucose 1-phosphate + GDP + H(+). Specific and highly efficient GDP-D-glucose phosphorylase regulating the levels of GDP-D-glucose in cells. In Danio rerio (Zebrafish), this protein is GDP-D-glucose phosphorylase 1 (gdpgp1).